The chain runs to 76 residues: MKFALFSVLVLMLIATFVAADDCPRICTSDYTPVCGTPSGGRRSANRTFANQCGLDSHNCLNKGDTYDKLHDGECK.

Positions 1–21 are cleaved as a signal peptide; the sequence is MKFALFSVLVLMLIATFVAAD. One can recognise a Kazal-like domain in the interval 22-76; that stretch reads DCPRICTSDYTPVCGTPSGGRRSANRTFANQCGLDSHNCLNKGDTYDKLHDGECK. 3 cysteine pairs are disulfide-bonded: Cys23-Cys60, Cys27-Cys53, and Cys35-Cys75.

As to expression, expressed by the salivary gland.

It localises to the secreted. Functionally, vasodilator protein that inhibits vasoconstriction of isolated rat femoral artery induced by phenylephrine. Since platelet aggregation and vasoconstriction are key hemostatic responses, particularly in small wounds, this protein likely participates in the antihemostatic responses during blood feeding. Blocks L-type calcium channels (Cav1/CACNA1) in left ventricular myocytes isolated from rat hearts. This is Vasotab-TY3 from Tabanus yao (Horsefly).